Here is a 2273-residue protein sequence, read N- to C-terminus: Acetyl-CoA carboxylase, mitochondrial (2273 aa).

The transit peptide at 1-104 (KGKTITHGQS…RGNIHKHTRL (104 aa)) directs the protein to the mitochondrion. The region spanning 134 to 635 (VISKILIANN…STGWLDDLIL (502 aa)) is the Biotin carboxylation domain. Residues 292-484 (KTNFVSVPDD…LPATQLQIAM (193 aa)) form the ATP-grasp domain. 332–337 (GGGGKG) provides a ligand contact to ATP. Arg-459 is an active-site residue. Residues 763 to 837 (LEAELNPTQV…EAGDVIAKLT (75 aa)) enclose the Biotinyl-binding domain. Lys-804 is modified (N6-biotinyllysine). A CoA carboxyltransferase N-terminal domain is found at 1532–1867 (PYSVKDWLQP…KRDMSPPLLE (336 aa)). Residues 1532 to 2187 (PYSVKDWLQP…EGQVIKRLQK (656 aa)) are carboxyltransferase. 3 residues coordinate CoA: Arg-1776, Lys-2080, and Arg-2082. The CoA carboxyltransferase C-terminal domain occupies 1871–2187 (RWDRDVDFKP…EGQVIKRLQK (317 aa)).

It depends on biotin as a cofactor.

The protein resides in the mitochondrion. The catalysed reaction is hydrogencarbonate + acetyl-CoA + ATP = malonyl-CoA + ADP + phosphate + H(+). The enzyme catalyses N(6)-biotinyl-L-lysyl-[protein] + hydrogencarbonate + ATP = N(6)-carboxybiotinyl-L-lysyl-[protein] + ADP + phosphate + H(+). It functions in the pathway lipid metabolism; malonyl-CoA biosynthesis; malonyl-CoA from acetyl-CoA: step 1/1. In terms of biological role, catalyzes the rate-limiting reaction in the mitochondrial fatty acid synthesis (FAS) type II pathway. Responsible for the production of the mitochondrial malonyl-CoA, used for the biosynthesis of the cofactor lipoic acid. This protein carries three functions: biotin carboxyl carrier protein, biotin carboxylase, and carboxyltransferase. In Saccharomyces cerevisiae (strain JAY291) (Baker's yeast), this protein is Acetyl-CoA carboxylase, mitochondrial (HFA1).